Consider the following 248-residue polypeptide: Peptidyl-tRNA hydrolase (248 aa).

A tRNA-binding site is contributed by tyrosine 14. Histidine 19 (proton acceptor) is an active-site residue. TRNA is bound by residues phenylalanine 64, asparagine 66, and asparagine 112. Residues 190 to 248 (PRSSTGEASKGRKKAQKSEPGVAKTPAKAATPEAPAAGDIPAAPEDSRSPMQKLLDKFK) form a disordered region. Low complexity predominate over residues 212 to 226 (AKTPAKAATPEAPAA).

The protein belongs to the PTH family. In terms of assembly, monomer.

It is found in the cytoplasm. It catalyses the reaction an N-acyl-L-alpha-aminoacyl-tRNA + H2O = an N-acyl-L-amino acid + a tRNA + H(+). Hydrolyzes ribosome-free peptidyl-tRNAs (with 1 or more amino acids incorporated), which drop off the ribosome during protein synthesis, or as a result of ribosome stalling. Functionally, catalyzes the release of premature peptidyl moieties from peptidyl-tRNA molecules trapped in stalled 50S ribosomal subunits, and thus maintains levels of free tRNAs and 50S ribosomes. The chain is Peptidyl-tRNA hydrolase from Ruegeria sp. (strain TM1040) (Silicibacter sp.).